The sequence spans 372 residues: Putative glutamate--cysteine ligase 2 (372 aa).

The protein belongs to the glutamate--cysteine ligase type 2 family. YbdK subfamily. Homodimer.

It carries out the reaction L-cysteine + L-glutamate + ATP = gamma-L-glutamyl-L-cysteine + ADP + phosphate + H(+). In terms of biological role, ATP-dependent carboxylate-amine ligase which exhibits weak glutamate--cysteine ligase activity. In Salmonella typhimurium (strain LT2 / SGSC1412 / ATCC 700720), this protein is Putative glutamate--cysteine ligase 2 (ybdK).